The primary structure comprises 72 residues: Translation initiation factor IF-1 2 (72 aa).

The S1-like domain occupies 1-72 (MAKEELIEFE…TKGRINYRHK (72 aa)).

It belongs to the IF-1 family. As to quaternary structure, component of the 30S ribosomal translation pre-initiation complex which assembles on the 30S ribosome in the order IF-2 and IF-3, IF-1 and N-formylmethionyl-tRNA(fMet); mRNA recruitment can occur at any time during PIC assembly.

It localises to the cytoplasm. Functionally, one of the essential components for the initiation of protein synthesis. Stabilizes the binding of IF-2 and IF-3 on the 30S subunit to which N-formylmethionyl-tRNA(fMet) subsequently binds. Helps modulate mRNA selection, yielding the 30S pre-initiation complex (PIC). Upon addition of the 50S ribosomal subunit IF-1, IF-2 and IF-3 are released leaving the mature 70S translation initiation complex. This is Translation initiation factor IF-1 2 from Ralstonia nicotianae (strain ATCC BAA-1114 / GMI1000) (Ralstonia solanacearum).